The sequence spans 559 residues: Dihydroxy-acid dehydratase (559 aa).

Asp78 provides a ligand contact to Mg(2+). Cys119 is a binding site for [2Fe-2S] cluster. Positions 120 and 121 each coordinate Mg(2+). Residue Lys121 is modified to N6-carboxylysine. [2Fe-2S] cluster is bound at residue Cys191. Glu442 is a binding site for Mg(2+). Ser468 (proton acceptor) is an active-site residue.

This sequence belongs to the IlvD/Edd family. In terms of assembly, homodimer. The cofactor is [2Fe-2S] cluster. Mg(2+) serves as cofactor.

It carries out the reaction (2R)-2,3-dihydroxy-3-methylbutanoate = 3-methyl-2-oxobutanoate + H2O. The enzyme catalyses (2R,3R)-2,3-dihydroxy-3-methylpentanoate = (S)-3-methyl-2-oxopentanoate + H2O. It participates in amino-acid biosynthesis; L-isoleucine biosynthesis; L-isoleucine from 2-oxobutanoate: step 3/4. Its pathway is amino-acid biosynthesis; L-valine biosynthesis; L-valine from pyruvate: step 3/4. Functionally, functions in the biosynthesis of branched-chain amino acids. Catalyzes the dehydration of (2R,3R)-2,3-dihydroxy-3-methylpentanoate (2,3-dihydroxy-3-methylvalerate) into 2-oxo-3-methylpentanoate (2-oxo-3-methylvalerate) and of (2R)-2,3-dihydroxy-3-methylbutanoate (2,3-dihydroxyisovalerate) into 2-oxo-3-methylbutanoate (2-oxoisovalerate), the penultimate precursor to L-isoleucine and L-valine, respectively. In Agathobacter rectalis (strain ATCC 33656 / DSM 3377 / JCM 17463 / KCTC 5835 / VPI 0990) (Eubacterium rectale), this protein is Dihydroxy-acid dehydratase.